The sequence spans 293 residues: Glutamyl-Q tRNA(Asp) synthetase (293 aa).

L-glutamate-binding positions include 8 to 12 (RFAPT) and E44. The 'HIGH' region signature appears at 11–21 (PTPSGYLHFGS). C100, C102, Y114, and C118 together coordinate Zn(2+). L-glutamate contacts are provided by Y171 and R189. Residues 227–231 (KLGKS) carry the 'KMSKS' region motif. Residue K230 coordinates ATP.

It belongs to the class-I aminoacyl-tRNA synthetase family. GluQ subfamily. Zn(2+) serves as cofactor.

In terms of biological role, catalyzes the tRNA-independent activation of glutamate in presence of ATP and the subsequent transfer of glutamate onto a tRNA(Asp). Glutamate is transferred on the 2-amino-5-(4,5-dihydroxy-2-cyclopenten-1-yl) moiety of the queuosine in the wobble position of the QUC anticodon. The polypeptide is Glutamyl-Q tRNA(Asp) synthetase (Pseudomonas paraeruginosa (strain DSM 24068 / PA7) (Pseudomonas aeruginosa (strain PA7))).